The sequence spans 139 residues: Putative nickel-responsive regulator (139 aa).

Ni(2+) contacts are provided by His79, His90, His92, and Cys98.

Belongs to the transcriptional regulatory CopG/NikR family. It depends on Ni(2+) as a cofactor.

In terms of biological role, transcriptional regulator. This Anaeromyxobacter sp. (strain K) protein is Putative nickel-responsive regulator.